The chain runs to 251 residues: 3-deoxy-manno-octulosonate cytidylyltransferase (251 aa).

This sequence belongs to the KdsB family.

It localises to the cytoplasm. It carries out the reaction 3-deoxy-alpha-D-manno-oct-2-ulosonate + CTP = CMP-3-deoxy-beta-D-manno-octulosonate + diphosphate. It participates in nucleotide-sugar biosynthesis; CMP-3-deoxy-D-manno-octulosonate biosynthesis; CMP-3-deoxy-D-manno-octulosonate from 3-deoxy-D-manno-octulosonate and CTP: step 1/1. It functions in the pathway bacterial outer membrane biogenesis; lipopolysaccharide biosynthesis. Its function is as follows. Activates KDO (a required 8-carbon sugar) for incorporation into bacterial lipopolysaccharide in Gram-negative bacteria. The chain is 3-deoxy-manno-octulosonate cytidylyltransferase from Alcanivorax borkumensis (strain ATCC 700651 / DSM 11573 / NCIMB 13689 / SK2).